Reading from the N-terminus, the 214-residue chain is Histone H1.1 (214 aa).

Residues 1-43 (MSETAPVPQPASVAPEKPAATKKTRKPAKAAVPRKKPAGPSVS) form a disordered region. The residue at position 2 (serine 2) is an N-acetylserine. Serine 2 and serine 12 each carry phosphoserine. The residue at position 17 (lysine 17) is an N6-acetyllysine. Basic residues predominate over residues 20–37 (ATKKTRKPAKAAVPRKKP). Lysine 36 is subject to N6-(beta-hydroxybutyryl)lysine. In terms of domain architecture, H15 spans 38 to 111 (AGPSVSELIV…GAAGSFKLNK (74 aa)). At serine 43 the chain carries Phosphoserine. Lysine 54 carries the post-translational modification N6-(beta-hydroxybutyryl)lysine. Residue arginine 56 is modified to Citrulline. Lysine 66 bears the N6-(beta-hydroxybutyryl)lysine mark. Serine 67 is modified (phosphoserine). An N6-acetyllysine modification is found at lysine 77. Residue lysine 87 is modified to N6-(beta-hydroxybutyryl)lysine. Lysine 92 carries the N6-(beta-hydroxybutyryl)lysine; alternate modification. Position 92 is an N6-acetyllysine; alternate (lysine 92). Residues 93-214 (GTLVQTKGTG…KPKKAAPKKK (122 aa)) form a disordered region. Serine 106 carries the post-translational modification Phosphoserine. The residue at position 108 (lysine 108) is an N6-(beta-hydroxybutyryl)lysine. Residues 116-144 (KASTTKVTVKAKASGAAKKPKKTAGAAAK) show a composition bias toward low complexity. An N6-acetyllysine modification is found at lysine 121. 2 stretches are compositionally biased toward basic residues: residues 145-179 (KTVK…KKVA) and 186-214 (KAVK…PKKK). A Phosphothreonine modification is found at threonine 202.

It belongs to the histone H1/H5 family. Interacts with DFFB. In terms of processing, H1 histones are progressively phosphorylated during the cell cycle, becoming maximally phosphorylated during late G2 phase and M phase, and being dephosphorylated sharply thereafter. Post-translationally, citrullination at Arg-56 (H1R54ci) by PADI4 takes place within the DNA-binding site of H1 and results in its displacement from chromatin and global chromatin decondensation, thereby promoting pluripotency and stem cell maintenance.

The protein localises to the nucleus. It localises to the chromosome. Its function is as follows. H1 histones bind to linker DNA between nucleosomes forming the macromolecular structure known as the chromatin fiber. H1 histones are necessary for the condensation of nucleosome chains into higher-order structured fibers. Also acts as a regulator of individual gene transcription through chromatin remodeling. The sequence is that of Histone H1.1 from Rattus norvegicus (Rat).